The primary structure comprises 212 residues: Thymidylate kinase (212 aa).

An ATP-binding site is contributed by 10–17 (GPEGAGKT).

The protein belongs to the thymidylate kinase family.

The enzyme catalyses dTMP + ATP = dTDP + ADP. Functionally, phosphorylation of dTMP to form dTDP in both de novo and salvage pathways of dTTP synthesis. The protein is Thymidylate kinase of Bacillus velezensis (strain DSM 23117 / BGSC 10A6 / LMG 26770 / FZB42) (Bacillus amyloliquefaciens subsp. plantarum).